The chain runs to 1726 residues: MKIIFFLCSFLFFIINTQCVTHESYQELVKKLEALEDAVLTGYGLFHKEKMILNEEEITTKGASAQSGTSGTSGTSGTSGTSGTSGTSAQSGTSGTSAQSGTSGTSAQSGTSGTSGTSGTSPSSRSNTLPRSNTSSGASPPADASDSDAKSYADLKHRVRNYLFTIKELKYPELFDLTNHMLTLCDNIHGFKYLIDGYEEINELLYKLNFYFDLLRAKLNDVCANDYCQIPFNLKIRANELDVLKKLVFGYRKPLDNIKDNVGKMEDYIKKNKTTIANINELIEGSKKTIDQNKNADNEEGKKKLYQAQYDLSIYNKQLEEAHNLISVLEKRIDTLKKNENIKELLDKINEIKNPPPANSGNTPNTLLDKNKKIEEHEEKIKEIAKTIKFNIDSLFTDPLELEYYLREKNKKVDVTPKSQDPTKSVQIPKVPYPNGIVYPLPLTDIHNSLAADNDKNSYGDLMNPDTKEKINEKIITDNKERKIFINNIKKQIDLEEKKINHTKEQNKKLLEDYEKSKKDYEELLEKFYEMKFNNNFDKDVVDKIFSARYTYNVEKQRYNNKFSSSNNSVYNVQKLKKALSYLEDYSLRKGISEKDFNHYYTLKTGLEADIKKLTEEIKSSENKILEKNFKGLTHSANASLEVYDIVKLQVQKVLLIKKIEDLRKIELFLKNAQLKDSIHVPNIYKPQNKPEPYYLIVLKKEVDKLKEFIPKVKDMLKKEQAVLSSITQPLVAASETTEDGGHSTHTLSQSGETEVTEETEETEETVGHTTTVTITLPPKEVKVVENSIEHKSNDNSQALTKTVYLKKLDEFLTKSYICHKYILVSNSSMDQKLLEVYNLTPEEENELKSCDPLDLLFNIQNNIPAMYSLYDSMNNDLQHLFFELYQKEMIYYLHKLKEENHIKKLLEEQKQITGTSSTSSPGNTTVNTAQSATHSNSQNQQSNASSTNTQNGVAVSSGPAVVEESHDPLTVLSISNDLKGIVSLLNLGNKTKVPNPLTISTTEMEKFYENILKNNDTYFNDDIKQFVKSNSKVITGLTETQKNALNDEIKKLKDTLQLSFDLYNKYKLKLDRLFNKKKELGQDKMQIKKLTLLKEQLESKLNSLNNPHNVLQNFSVFFNKKKEAEIAETENTLENTKILLKHYKGLVKYYNGESSPLKTLSEVSIQTEDNYANLEKFRVLSKIDGKLNDNLHLGKKKLSFLSSGLHQLITELKEVIKNKNYTGNSPSENNKKVNEALKSYENFLPEAKVTTVVTPPQPDVTPSPLSVRVSGSSGSTKEETQIPTSGSLLTELQQVVQLQNYDEEDDSLVVLPIFGESEDNDEYLDQVVTGEAISVTMDNILSGFENEYDVIYLKPLAGVYRSLKKQIEKNIFTFNLNLNDILNSRLKKRKYFLDVLESDLMQFKHISSNEYIIEDSFKLLNSEQKNTLLKSYKYIKESVENDIKFAQEGISYYEKVLAKYKDDLESIKKVIKEEKEKFPSSPPTTPPSPAKTDEQKKESKFLPFLTNIETLYNNLVNKIDDYLINLKAKINDCNVEKDEAHVKITKLSDLKAIDDKIDLFKNHNDFDAIKKLINDDTKKDMLGKLLSTGLVQNFPNTIISKLIEGKFQDMLNISQHQCVKKQCPENSGCFRHLDEREECKCLLNYKQEGDKCVENPNPTCNENNGGCDADAKCTEEDSGSNGKKITCECTKPDSYPLFDGIFCSSSNFLGISFLLILMLILYSFI.

The first 19 residues, 1–19 (MKIIFFLCSFLFFIINTQC), serve as a signal peptide directing secretion. A compositionally biased stretch (low complexity) spans 61 to 124 (KGASAQSGTS…SGTSGTSPSS (64 aa)). Residues 61-149 (KGASAQSGTS…PPADASDSDA (89 aa)) are disordered. The span at 125-134 (RSNTLPRSNT) shows a compositional bias: polar residues. Asn-133 is a glycosylation site (N-linked (GlcNAc...) asparagine). Positions 135–144 (SSGASPPADA) are enriched in low complexity. Asn-272, Asn-501, Asn-567, and Asn-638 each carry an N-linked (GlcNAc...) asparagine glycan. Residues 735–771 (SETTEDGGHSTHTLSQSGETEVTEETEETEETVGHTT) form a disordered region. Over residues 755 to 765 (EVTEETEETEE) the composition is skewed to acidic residues. N-linked (GlcNAc...) asparagine glycosylation is found at Asn-827, Asn-924, Asn-944, Asn-990, Asn-1016, Asn-1114, and Asn-1221. Over residues 914–952 (TGTSSTSSPGNTTVNTAQSATHSNSQNQQSNASSTNTQN) the composition is skewed to low complexity. Residues 914–961 (TGTSSTSSPGNTTVNTAQSATHSNSQNQQSNASSTNTQNGVAVSSGPA) form a disordered region. Disordered regions lie at residues 1254 to 1284 (VTPPQPDVTPSPLSVRVSGSSGSTKEETQIP) and 1476 to 1497 (KEKFPSSPPTTPPSPAKTDEQK). Polar residues predominate over residues 1270-1284 (VSGSSGSTKEETQIP). Over residues 1481 to 1490 (SSPPTTPPSP) the composition is skewed to pro residues. A glycan (N-linked (GlcNAc...) asparagine) is linked at Asn-1613. EGF-like domains lie at 1617–1657 (HQCV…VENP) and 1658–1705 (NPTC…IFCS). Disulfide bonds link Cys-1619/Cys-1630, Cys-1624/Cys-1640, Cys-1642/Cys-1653, Cys-1661/Cys-1674, Cys-1668/Cys-1688, and Cys-1690/Cys-1704. Ser-1705 is lipidated: GPI-anchor amidated serine. The propeptide at 1706-1726 (SSNFLGISFLLILMLILYSFI) is removed in mature form.

In terms of assembly, forms a complex composed of subunits p83, p30, p38, and p42 which remain non-covalently associated; the complex is formed at the merozoite surface prior to egress from host erythrocytes. Forms a complex composed of processed MSP1 subunits, MSP6 subunit p36 and MSP7; the complex is formed at the merozoite surface prior to egress from host erythrocytes. Within the complex, interacts (via subunit p38) with MSP6 subunit p36 and (via subunits p83, p30 and p38) with MSP7 (via subunit p22). Forms a complex composed of MSP1, MSP6, DBLMSP1 and DBLMSP2. Within the complex, interacts (via subunit p38) with DBLMSP1 and DBLMSP2. Forms a complex composed of MSP1, and rhoptry proteins RhopH3, RAP1 and CLAG9/RhopH3. Within the complex, interacts (via subunits p42 and p19) with RhopH3 (via C-terminus). Forms a complex composed of MSP1, MSP6, MSP7, MSP9 and MSP3; within the complex, MSP6 and MSP9 mediate the binding to the host erythrocyte. Interacts (via subunits p19 and p42) with MSP9; the interaction is direct; MSP1 subunits p19 or p42, and MSP9 form a co-ligand complex that interacts with host SLC4A1/Band 3 protein. May interact with PFD6. Interacts with host spectrin. Interacts with host glycophorin GYPA in a sialic acid-independent manner. As to quaternary structure, interacts with host proinflammatory cytokine S100P; the interaction blocks S100P inflammatory and chemotactic activities. In terms of assembly, interacts with host SLC4A1/Band 3 (via 5ABC region) on the host erythrocyte surface in a sialic acid-independent manner. The p190 precursor is cleaved by SUB1 prior to merozoite egress into 4 subunits p83, p30, p38, and p42 which remain non-covalently associated. SUB1-mediated proteolytic cleavage occurs in an orderly manner; the first cleavage occurs at the p30/p38 site, followed by cleavage at the p83/p30 site, the last cleavage occurs at the p38/p42 site. The order of cleavage is essential for parasite viability. SUB1-mediated processing is essential for merozoite egress. In a second processing step during erythrocyte invasion, p42 is cleaved by SUB2 into p33 and p19; the latter remains attached to the merozoite surface via its GPI-anchor and is endocytosed during the subsequent ring stage.

It localises to the cell membrane. The protein resides in the secreted. The protein localises to the vacuole membrane. Functionally, during the asexual blood stage, involved in merozoite egress from host erythrocytes possibly via its interaction with the host cytoskeleton protein spectrin resulting in the destabilization of the host cytoskeleton and thus leading to erythrocyte cell membrane rupture. Involved in the binding to host erythrocytes and is required for host erythrocyte invasion. By binding to host proinflammatory cytokine S100P may interfere with host immune responses. In terms of biological role, involved in merozoite invasion of host erythrocytes. May play a role in the biogenesis and/or function of the food vacuole during the intraerythrocytic development. This is Merozoite surface protein 1 from Plasmodium falciparum (isolate Palo Alto / Uganda).